We begin with the raw amino-acid sequence, 168 residues long: Protein GrpE (168 aa).

The protein belongs to the GrpE family. Homodimer.

The protein localises to the cytoplasm. Its function is as follows. Participates actively in the response to hyperosmotic and heat shock by preventing the aggregation of stress-denatured proteins, in association with DnaK and GrpE. It is the nucleotide exchange factor for DnaK and may function as a thermosensor. Unfolded proteins bind initially to DnaJ; upon interaction with the DnaJ-bound protein, DnaK hydrolyzes its bound ATP, resulting in the formation of a stable complex. GrpE releases ADP from DnaK; ATP binding to DnaK triggers the release of the substrate protein, thus completing the reaction cycle. Several rounds of ATP-dependent interactions between DnaJ, DnaK and GrpE are required for fully efficient folding. The sequence is that of Protein GrpE from Thermotoga neapolitana (strain ATCC 49049 / DSM 4359 / NBRC 107923 / NS-E).